A 240-amino-acid polypeptide reads, in one-letter code: Phosphoribosylaminoimidazole-succinocarboxamide synthase (240 aa).

It belongs to the SAICAR synthetase family.

It carries out the reaction 5-amino-1-(5-phospho-D-ribosyl)imidazole-4-carboxylate + L-aspartate + ATP = (2S)-2-[5-amino-1-(5-phospho-beta-D-ribosyl)imidazole-4-carboxamido]succinate + ADP + phosphate + 2 H(+). Its pathway is purine metabolism; IMP biosynthesis via de novo pathway; 5-amino-1-(5-phospho-D-ribosyl)imidazole-4-carboxamide from 5-amino-1-(5-phospho-D-ribosyl)imidazole-4-carboxylate: step 1/2. The sequence is that of Phosphoribosylaminoimidazole-succinocarboxamide synthase from Wigglesworthia glossinidia brevipalpis.